A 296-amino-acid polypeptide reads, in one-letter code: Cytidine deaminase (296 aa).

CMP/dCMP-type deaminase domains lie at 47–167 (EESE…FGPS) and 186–296 (DSSD…IDPA). 88 to 90 (NLE) serves as a coordination point for substrate. A Zn(2+)-binding site is contributed by H101. E103 (proton donor) is an active-site residue. Residues C128 and C131 each coordinate Zn(2+).

This sequence belongs to the cytidine and deoxycytidylate deaminase family. As to quaternary structure, homodimer. The cofactor is Zn(2+).

It carries out the reaction cytidine + H2O + H(+) = uridine + NH4(+). It catalyses the reaction 2'-deoxycytidine + H2O + H(+) = 2'-deoxyuridine + NH4(+). Functionally, this enzyme scavenges exogenous and endogenous cytidine and 2'-deoxycytidine for UMP synthesis. In Shewanella woodyi (strain ATCC 51908 / MS32), this protein is Cytidine deaminase.